The primary structure comprises 356 residues: Protein RecA (356 aa).

ATP is bound at residue 67–74 (GPESSGKT).

This sequence belongs to the RecA family.

The protein resides in the cytoplasm. Functionally, can catalyze the hydrolysis of ATP in the presence of single-stranded DNA, the ATP-dependent uptake of single-stranded DNA by duplex DNA, and the ATP-dependent hybridization of homologous single-stranded DNAs. It interacts with LexA causing its activation and leading to its autocatalytic cleavage. The protein is Protein RecA of Yersinia pseudotuberculosis serotype I (strain IP32953).